The chain runs to 324 residues: MFSKATLKERRQYYREEWSTKDMPDFILKDLKKREFGFDHNGKGPNDRYKVFRGSESLKKFLRYKAPFAAYISVAFYNNPRRREDWQKAEYIFDVDAKDIPIRSCQCDGVCEVCLGQALEIVNSLIDTLQDDLGLNNIHLVYSGRGYHIRILDEEMMTSGSELRSEVLKYVAGAEVPKSNFFNPDISNKSFNFEHFSIPVGYSKIFTDKLKYNIQHLVGNEELDEINPKLMKDIIKYRHHLDNDNWGYFKRDIGPRRYKNLTEAMARVNLSTIDAKVSIDLKRILRLPSSLHSKVSMKCMEVKNRETFDPLQEAVPKFVEERGE.

Catalysis depends on residues aspartate 94, aspartate 96, and aspartate 274.

Belongs to the eukaryotic-type primase small subunit family. As to quaternary structure, heterodimer of a small subunit (PriS) and a large subunit (PriL). Requires Mg(2+) as cofactor. It depends on Mn(2+) as a cofactor.

Its function is as follows. Catalytic subunit of DNA primase, an RNA polymerase that catalyzes the synthesis of short RNA molecules used as primers for DNA polymerase during DNA replication. The small subunit contains the primase catalytic core and has DNA synthesis activity on its own. Binding to the large subunit stabilizes and modulates the activity, increasing the rate of DNA synthesis while decreasing the length of the DNA fragments, and conferring RNA synthesis capability. The DNA polymerase activity may enable DNA primase to also catalyze primer extension after primer synthesis. May also play a role in DNA repair. This chain is DNA primase small subunit PriS, found in Methanobrevibacter smithii (strain ATCC 35061 / DSM 861 / OCM 144 / PS).